The following is a 365-amino-acid chain: uncharacterized protein (365 aa).

A coiled-coil region spans residues 18–46 (TAQEALTLIEKLDSDYKEKEEKITALSVH).

This is an uncharacterized protein from Bacillus subtilis (strain 168).